A 404-amino-acid polypeptide reads, in one-letter code: Adenosylhomocysteinase (404 aa).

Residues Asp114 and Glu139 each coordinate substrate. NAD(+) is bound at residue 140–142 (TTT). Substrate is bound by residues Lys169 and Asp173. NAD(+) is bound by residues Asn174, 203 to 208 (GYGWCG), Glu226, Asn261, 282 to 284 (AGH), and Asn329.

It belongs to the adenosylhomocysteinase family. It depends on NAD(+) as a cofactor.

The protein localises to the cytoplasm. The enzyme catalyses S-adenosyl-L-homocysteine + H2O = L-homocysteine + adenosine. It functions in the pathway amino-acid biosynthesis; L-homocysteine biosynthesis; L-homocysteine from S-adenosyl-L-homocysteine: step 1/1. Its function is as follows. May play a key role in the regulation of the intracellular concentration of adenosylhomocysteine. The chain is Adenosylhomocysteinase from Thermotoga maritima (strain ATCC 43589 / DSM 3109 / JCM 10099 / NBRC 100826 / MSB8).